The chain runs to 468 residues: Cysteine--tRNA ligase (468 aa).

Cys-28 serves as a coordination point for Zn(2+). The 'HIGH' region signature appears at 30–40; the sequence is PTVYNYIHIGN. Cys-212, His-237, and Glu-241 together coordinate Zn(2+). A 'KMSKS' region motif is present at residues 271 to 275; the sequence is KMSKS. Lys-274 provides a ligand contact to ATP.

Belongs to the class-I aminoacyl-tRNA synthetase family. As to quaternary structure, monomer. The cofactor is Zn(2+).

The protein localises to the cytoplasm. It catalyses the reaction tRNA(Cys) + L-cysteine + ATP = L-cysteinyl-tRNA(Cys) + AMP + diphosphate. This is Cysteine--tRNA ligase from Lacticaseibacillus casei (strain BL23) (Lactobacillus casei).